The sequence spans 219 residues: tRNA (guanine-N(7)-)-methyltransferase (219 aa).

S-adenosyl-L-methionine contacts are provided by glutamate 44, aspartate 69, glutamate 102, and asparagine 125. The substrate site is built by lysine 129 and aspartate 161.

Belongs to the class I-like SAM-binding methyltransferase superfamily. TrmB family.

It catalyses the reaction guanosine(46) in tRNA + S-adenosyl-L-methionine = N(7)-methylguanosine(46) in tRNA + S-adenosyl-L-homocysteine. The protein operates within tRNA modification; N(7)-methylguanine-tRNA biosynthesis. Functionally, catalyzes the formation of N(7)-methylguanine at position 46 (m7G46) in tRNA. This Clostridium perfringens (strain SM101 / Type A) protein is tRNA (guanine-N(7)-)-methyltransferase.